The chain runs to 153 residues: Insulin-like growth factor 1 (153 aa).

The tract at residues 49 to 77 is b; sequence GPETLCGAELVDALQFVCGDRGFYFNKPT. 3 disulfides stabilise this stretch: Cys-54–Cys-96, Cys-66–Cys-109, and Cys-95–Cys-100. The tract at residues 78–89 is c; that stretch reads GYGSSSRRAPQT. Positions 90–110 are a; that stretch reads GIVDECCFRSCDLRRLEMYCA. Residues 111-118 are d; it reads PLKPAKSA. Positions 119–153 are cleaved as a propeptide — e peptide; that stretch reads RSVRAQRHTDMPKAQKEVHLKNASRGSAGNKNYRM. The tract at residues 120–153 is disordered; it reads SVRAQRHTDMPKAQKEVHLKNASRGSAGNKNYRM. Basic and acidic residues predominate over residues 125–138; sequence RHTDMPKAQKEVHL. A compositionally biased stretch (polar residues) spans 142–153; sequence SRGSAGNKNYRM.

This sequence belongs to the insulin family. As to quaternary structure, forms a ternary complex with IGFR1 and ITGAV:ITGB3. Forms a ternary complex with IGFR1 and ITGA6:ITGB4. Forms a ternary complex with IGFBP3 and ALS.

It localises to the secreted. Functionally, the insulin-like growth factors, isolated from plasma, are structurally and functionally related to insulin but have a much higher growth-promoting activity. May be a physiological regulator of [1-14C]-2-deoxy-D-glucose (2DG) transport and glycogen synthesis in osteoblasts. Stimulates glucose transport in bone-derived osteoblastic (PyMS) cells and is effective at much lower concentrations than insulin, not only regarding glycogen and DNA synthesis but also with regard to enhancing glucose uptake. May play a role in synapse maturation. Ca(2+)-dependent exocytosis of IGF1 is required for sensory perception of smell in the olfactory bulb. Acts as a ligand for IGF1R. Binds to the alpha subunit of IGF1R, leading to the activation of the intrinsic tyrosine kinase activity which autophosphorylates tyrosine residues in the beta subunit thus initiating a cascade of down-stream signaling events leading to activation of the PI3K-AKT/PKB and the Ras-MAPK pathways. Binds to integrins ITGAV:ITGB3 and ITGA6:ITGB4. Its binding to integrins and subsequent ternary complex formation with integrins and IGFR1 are essential for IGF1 signaling. Induces the phosphorylation and activation of IGFR1, MAPK3/ERK1, MAPK1/ERK2 and AKT1. As part of the MAPK/ERK signaling pathway, acts as a negative regulator of apoptosis in cardiomyocytes via promotion of STUB1/CHIP-mediated ubiquitination and degradation of ICER-type isoforms of CREM. This Ailuropoda melanoleuca (Giant panda) protein is Insulin-like growth factor 1.